Reading from the N-terminus, the 389-residue chain is snRNA-activating protein complex subunit 1 (389 aa).

A compositionally biased stretch (low complexity) spans 1–15; sequence MGTPAGAGTRPTGAG. Disordered regions lie at residues 1–22, 245–276, and 290–389; these read MGTP…GVGI, WHKE…ERCE, and SAVV…KRKC. The tract at residues 20–187 is SNAPC3-binding; sequence VGIPPGLQTD…QKFKDPNDRV (168 aa). The segment at 183–287 is SNAPC4-binding; the sequence is PNDRVMKLIT…AVSLAKIKAK (105 aa). Basic and acidic residues predominate over residues 245–262; the sequence is WHKERKNPSLKPKLKDGE. Phosphoserine is present on residues Ser308 and Ser309.

Part of the SNAPc complex composed of 5 subunits: SNAPC1, SNAPC2, SNAPC3, SNAPC4 and SNAPC5. SNAPC1 interacts with SNAPC3, SNAPC4 and TBP.

The protein localises to the nucleus. Its function is as follows. Part of the SNAPc complex required for the transcription of both RNA polymerase II and III small-nuclear RNA genes. Binds to the proximal sequence element (PSE), a non-TATA-box basal promoter element common to these 2 types of genes. Recruits TBP and BRF2 to the U6 snRNA TATA box. This Mus musculus (Mouse) protein is snRNA-activating protein complex subunit 1 (Snapc1).